The primary structure comprises 152 residues: Transcriptional repressor NrdR (152 aa).

Residues 3-34 (CPFCSTEETKVIDSRLVSEGYQVRRRRECTNC) fold into a zinc finger. The ATP-cone domain occupies 49 to 139 (PKIVKTDGYR…VYLSFENINE (91 aa)).

It belongs to the NrdR family. Requires Zn(2+) as cofactor.

In terms of biological role, negatively regulates transcription of bacterial ribonucleotide reductase nrd genes and operons by binding to NrdR-boxes. This chain is Transcriptional repressor NrdR, found in Actinobacillus succinogenes (strain ATCC 55618 / DSM 22257 / CCUG 43843 / 130Z).